The sequence spans 1207 residues: ATP-dependent helicase/nuclease subunit A (1207 aa).

The UvrD-like helicase ATP-binding domain occupies 2-472 (PQFTKEQQQA…ILLSDNFRST (471 aa)). Position 23–30 (23–30 (ASAGSGKT)) interacts with ATP. The region spanning 492–783 (GGIDYSKEGQ…RLMTIHGSKG (292 aa)) is the UvrD-like helicase C-terminal domain.

Belongs to the helicase family. AddA subfamily. Heterodimer of AddA and AddB/RexB. The cofactor is Mg(2+).

The catalysed reaction is Couples ATP hydrolysis with the unwinding of duplex DNA by translocating in the 3'-5' direction.. It carries out the reaction ATP + H2O = ADP + phosphate + H(+). Its function is as follows. The heterodimer acts as both an ATP-dependent DNA helicase and an ATP-dependent, dual-direction single-stranded exonuclease. Recognizes the chi site generating a DNA molecule suitable for the initiation of homologous recombination. The AddA nuclease domain is required for chi fragment generation; this subunit has the helicase and 3' -&gt; 5' nuclease activities. The polypeptide is ATP-dependent helicase/nuclease subunit A (Lactobacillus acidophilus (strain ATCC 700396 / NCK56 / N2 / NCFM)).